The following is a 498-amino-acid chain: ATP synthase subunit beta, chloroplastic (498 aa).

Threonine 6 carries the post-translational modification Phosphothreonine. A Phosphoserine modification is found at serine 13. Position 172–179 (172–179 (GGAGVGKT)) interacts with ATP.

The protein belongs to the ATPase alpha/beta chains family. As to quaternary structure, F-type ATPases have 2 components, CF(1) - the catalytic core - and CF(0) - the membrane proton channel. CF(1) has five subunits: alpha(3), beta(3), gamma(1), delta(1), epsilon(1). CF(0) has four main subunits: a(1), b(1), b'(1) and c(9-12).

Its subcellular location is the plastid. It localises to the chloroplast thylakoid membrane. The catalysed reaction is ATP + H2O + 4 H(+)(in) = ADP + phosphate + 5 H(+)(out). Its function is as follows. Produces ATP from ADP in the presence of a proton gradient across the membrane. The catalytic sites are hosted primarily by the beta subunits. The protein is ATP synthase subunit beta, chloroplastic of Crucihimalaya wallichii (Rock-cress).